Consider the following 251-residue polypeptide: tRNA (guanine-N(7)-)-methyltransferase (251 aa).

The interval 1–29 (MTQTLSSQDPQAPAAPPMPGAAGSAPADV) is disordered. The S-adenosyl-L-methionine site is built by glutamate 84, glutamate 109, aspartate 136, and aspartate 159. Residue aspartate 159 is part of the active site. Substrate is bound at residue lysine 163. The tract at residues 165–170 (RHNKRR) is interaction with RNA. Substrate-binding positions include aspartate 195 and 230-233 (TKFE).

This sequence belongs to the class I-like SAM-binding methyltransferase superfamily. TrmB family.

The enzyme catalyses guanosine(46) in tRNA + S-adenosyl-L-methionine = N(7)-methylguanosine(46) in tRNA + S-adenosyl-L-homocysteine. It functions in the pathway tRNA modification; N(7)-methylguanine-tRNA biosynthesis. In terms of biological role, catalyzes the formation of N(7)-methylguanine at position 46 (m7G46) in tRNA. The chain is tRNA (guanine-N(7)-)-methyltransferase from Acidovorax sp. (strain JS42).